The primary structure comprises 220 residues: Probable GTP-binding protein EngB (220 aa).

The EngB-type G domain maps to A31–P205. GTP contacts are provided by residues G39 to S46, G66 to L70, D84 to G87, T151 to D154, and F184 to S186. Positions 46 and 68 each coordinate Mg(2+).

It belongs to the TRAFAC class TrmE-Era-EngA-EngB-Septin-like GTPase superfamily. EngB GTPase family. It depends on Mg(2+) as a cofactor.

Functionally, necessary for normal cell division and for the maintenance of normal septation. In Shewanella sediminis (strain HAW-EB3), this protein is Probable GTP-binding protein EngB.